Here is a 166-residue protein sequence, read N- to C-terminus: Endoribonuclease YbeY (166 aa).

His111, His115, and His121 together coordinate Zn(2+). The disordered stretch occupies residues 141-166 (LGYPDPYAEDESADHPHSDTPSKDHE). Over residues 153-166 (ADHPHSDTPSKDHE) the composition is skewed to basic and acidic residues.

The protein belongs to the endoribonuclease YbeY family. Requires Zn(2+) as cofactor.

It localises to the cytoplasm. In terms of biological role, single strand-specific metallo-endoribonuclease involved in late-stage 70S ribosome quality control and in maturation of the 3' terminus of the 16S rRNA. The polypeptide is Endoribonuclease YbeY (Pseudomonas savastanoi pv. phaseolicola (strain 1448A / Race 6) (Pseudomonas syringae pv. phaseolicola (strain 1448A / Race 6))).